A 303-amino-acid polypeptide reads, in one-letter code: N-acetyl-D-glucosamine kinase (303 aa).

ATP contacts are provided by residues 4-11 (GFDIGGTK) and 133-140 (GVGGGLIF). Residues histidine 157, cysteine 177, cysteine 179, and cysteine 184 each coordinate Zn(2+).

Belongs to the ROK (NagC/XylR) family. NagK subfamily.

The enzyme catalyses N-acetyl-D-glucosamine + ATP = N-acetyl-D-glucosamine 6-phosphate + ADP + H(+). The protein operates within cell wall biogenesis; peptidoglycan recycling. Its function is as follows. Catalyzes the phosphorylation of N-acetyl-D-glucosamine (GlcNAc) derived from cell-wall degradation, yielding GlcNAc-6-P. The chain is N-acetyl-D-glucosamine kinase from Escherichia coli O127:H6 (strain E2348/69 / EPEC).